The primary structure comprises 229 residues: Sugar fermentation stimulation protein homolog (229 aa).

This sequence belongs to the SfsA family.

The protein is Sugar fermentation stimulation protein homolog of Caldanaerobacter subterraneus subsp. tengcongensis (strain DSM 15242 / JCM 11007 / NBRC 100824 / MB4) (Thermoanaerobacter tengcongensis).